The following is a 566-amino-acid chain: MKQSMVFSPTLREVPADAEIKSHQLLLRAGFMRQNASGIYSFLPFGLKVLHKVERIVREEMERAGAVELLMPAMQAAELWQESGRWYSYGSELMRMKDRNAREFALGATHEEVITDLVRDEVKSYKKLPLTLYQIQTKFRDEQRPRFGLLRGREFLMKDAYSFHATQESLDEVYDRLYKAYSNIFARCGLNFRAVIADSGAMGGKDTHEFMVLSDVGEDTIAYSDTSDYAANIEMAPVVATYTKSDEAEKELEKVATPDQKAIEEVSAFLNIEADKCIKSMVFKVDEKLVVVLVRGDHEVNDVKVKNVYGASVVELASHEEVKELLNCEVGSLGPIGVNGDIEIIADHAVASIVNGCSGANEEGFHYVNVNPERDFKVSQYTDLRFIQEGDQSPDGNGTILFARGIEVGHVFKLGTRYSEAMNATFLDENGKTQPLIMGCYGIGVSRTVAAIAEQFNDENGLVWPKAVAPFHVHVIPVNMKSDAQREMGENIYNSLQEQGYEVLLDDRAERAGVKFADADLFGLPVRVTVGKKADEGIVEVKVRATGESEEIKVEELQTYIANILK.

The protein belongs to the class-II aminoacyl-tRNA synthetase family. ProS type 1 subfamily. As to quaternary structure, homodimer.

It is found in the cytoplasm. The catalysed reaction is tRNA(Pro) + L-proline + ATP = L-prolyl-tRNA(Pro) + AMP + diphosphate. Catalyzes the attachment of proline to tRNA(Pro) in a two-step reaction: proline is first activated by ATP to form Pro-AMP and then transferred to the acceptor end of tRNA(Pro). As ProRS can inadvertently accommodate and process non-cognate amino acids such as alanine and cysteine, to avoid such errors it has two additional distinct editing activities against alanine. One activity is designated as 'pretransfer' editing and involves the tRNA(Pro)-independent hydrolysis of activated Ala-AMP. The other activity is designated 'posttransfer' editing and involves deacylation of mischarged Ala-tRNA(Pro). The misacylated Cys-tRNA(Pro) is not edited by ProRS. The chain is Proline--tRNA ligase 1 from Bacillus cereus (strain ZK / E33L).